A 350-amino-acid chain; its full sequence is tRNA U34 carboxymethyltransferase (350 aa).

Carboxy-S-adenosyl-L-methionine contacts are provided by residues Lys101, Trp125, Lys130, Gly150, 172 to 174 (DPS), 208 to 209 (LE), Met224, Tyr228, and Arg343.

Belongs to the class I-like SAM-binding methyltransferase superfamily. CmoB family. In terms of assembly, homotetramer.

It catalyses the reaction carboxy-S-adenosyl-L-methionine + 5-hydroxyuridine(34) in tRNA = 5-carboxymethoxyuridine(34) in tRNA + S-adenosyl-L-homocysteine + H(+). Catalyzes carboxymethyl transfer from carboxy-S-adenosyl-L-methionine (Cx-SAM) to 5-hydroxyuridine (ho5U) to form 5-carboxymethoxyuridine (cmo5U) at position 34 in tRNAs. The polypeptide is tRNA U34 carboxymethyltransferase (Psychrobacter arcticus (strain DSM 17307 / VKM B-2377 / 273-4)).